Reading from the N-terminus, the 838-residue chain is Major vault protein (838 aa).

MVP repeat units follow at residues 13–52, 53–114, 118–170, 171–223, 224–278, 280–328, 329–380, and 381–433; these read VHILDNNTNVTRCMVGPLVYTRKENERCLFNPKPCIVVPP, RFYC…FKLK, VNTG…HIIS, PNTA…ITLT, DTEA…IVLN, KEYC…NVVS, KDQA…IALD, and KNEG…CMSE.

As to quaternary structure, the vault ribonucleoprotein particle is a huge (400 A x 670 A) cage structure of 12.9 MDa. It consists of a dimer of half-vaults, with each half-vault comprising 39 identical major vault protein (MVP) chains, PARP4 and one or more vault RNAs (vRNAs).

It is found in the cytoplasm. It localises to the nucleus. Required for normal vault structure. Vaults are multi-subunit structures that may act as scaffolds for proteins involved in signal transduction. Vaults may also play a role in nucleo-cytoplasmic transport. The chain is Major vault protein from Trypanosoma cruzi (strain CL Brener).